Consider the following 271-residue polypeptide: Phosphatidylglycerol--prolipoprotein diacylglyceryl transferase (271 aa).

Transmembrane regions (helical) follow at residues 25–45 (WYGI…KFFV), 60–80 (YFIW…ILIY), 103–123 (FVGI…IATL), and 131–151 (ANPW…YVFG). Arg152 provides a ligand contact to a 1,2-diacyl-sn-glycero-3-phospho-(1'-sn-glycerol). A run of 3 helical transmembrane segments spans residues 181–201 (PSQL…VYLA), 209–229 (GELI…CEFY), and 235–255 (GIGF…IMFI).

Belongs to the Lgt family.

It localises to the cell inner membrane. It catalyses the reaction L-cysteinyl-[prolipoprotein] + a 1,2-diacyl-sn-glycero-3-phospho-(1'-sn-glycerol) = an S-1,2-diacyl-sn-glyceryl-L-cysteinyl-[prolipoprotein] + sn-glycerol 1-phosphate + H(+). Its pathway is protein modification; lipoprotein biosynthesis (diacylglyceryl transfer). In terms of biological role, catalyzes the transfer of the diacylglyceryl group from phosphatidylglycerol to the sulfhydryl group of the N-terminal cysteine of a prolipoprotein, the first step in the formation of mature lipoproteins. The polypeptide is Phosphatidylglycerol--prolipoprotein diacylglyceryl transferase (Campylobacter jejuni (strain RM1221)).